The primary structure comprises 190 residues: ATP synthase subunit delta (190 aa).

This sequence belongs to the ATPase delta chain family. In terms of assembly, F-type ATPases have 2 components, F(1) - the catalytic core - and F(0) - the membrane proton channel. F(1) has five subunits: alpha(3), beta(3), gamma(1), delta(1), epsilon(1). F(0) has three main subunits: a(1), b(2) and c(10-14). The alpha and beta chains form an alternating ring which encloses part of the gamma chain. F(1) is attached to F(0) by a central stalk formed by the gamma and epsilon chains, while a peripheral stalk is formed by the delta and b chains.

The protein resides in the cell inner membrane. In terms of biological role, f(1)F(0) ATP synthase produces ATP from ADP in the presence of a proton or sodium gradient. F-type ATPases consist of two structural domains, F(1) containing the extramembraneous catalytic core and F(0) containing the membrane proton channel, linked together by a central stalk and a peripheral stalk. During catalysis, ATP synthesis in the catalytic domain of F(1) is coupled via a rotary mechanism of the central stalk subunits to proton translocation. Functionally, this protein is part of the stalk that links CF(0) to CF(1). It either transmits conformational changes from CF(0) to CF(1) or is implicated in proton conduction. In Beijerinckia indica subsp. indica (strain ATCC 9039 / DSM 1715 / NCIMB 8712), this protein is ATP synthase subunit delta.